The chain runs to 363 residues: Cytoplasmic tRNA 2-thiolation protein 1 (363 aa).

The interval 340 to 363 (ASLNGTPRTPPTPAEPVEGIERAA) is disordered.

Belongs to the TtcA family. CTU1/NCS6/ATPBD3 subfamily.

Its subcellular location is the cytoplasm. Its pathway is tRNA modification; 5-methoxycarbonylmethyl-2-thiouridine-tRNA biosynthesis. Its function is as follows. Plays a central role in 2-thiolation of mcm(5)S(2)U at tRNA wobble positions of tRNA(Lys), tRNA(Glu) and tRNA(Gln). Directly binds tRNAs and probably acts by catalyzing adenylation of tRNAs, an intermediate required for 2-thiolation. It is unclear whether it acts as a sulfurtransferase that transfers sulfur from thiocarboxylated URM1 onto the uridine of tRNAs at wobble position. Prior mcm(5) tRNA modification by the elongator complex is required for 2-thiolation. May also be involved in protein urmylation. The sequence is that of Cytoplasmic tRNA 2-thiolation protein 1 from Cryptococcus neoformans var. neoformans serotype D (strain B-3501A) (Filobasidiella neoformans).